The sequence spans 86 residues: Small ribosomal subunit protein bS20 (86 aa).

The disordered stretch occupies residues M1–T26.

It belongs to the bacterial ribosomal protein bS20 family.

Functionally, binds directly to 16S ribosomal RNA. In Psychromonas ingrahamii (strain DSM 17664 / CCUG 51855 / 37), this protein is Small ribosomal subunit protein bS20.